Here is a 677-residue protein sequence, read N- to C-terminus: Beta-galactosidase (677 aa).

A signal peptide spans 1 to 23; sequence MPGFLVRILPLLLVLLLLGPTRG. A propeptide spanning residues 24–28 is cleaved from the precursor; it reads LRNAT. A glycan (N-linked (GlcNAc...) asparagine) is linked at asparagine 26. Substrate-binding residues include tyrosine 83, glutamate 129, and asparagine 187. Glutamate 188 functions as the Proton donor in the catalytic mechanism. Cysteine 195 and cysteine 230 are oxidised to a cystine. N-linked (GlcNAc...) asparagine glycosylation is present at asparagine 247. The active-site Nucleophile is the glutamate 268. Tyrosine 333 is a binding site for substrate. Residues asparagine 464, asparagine 498, asparagine 542, asparagine 545, and asparagine 555 are each glycosylated (N-linked (GlcNAc...) asparagine). Cysteine 626 and cysteine 634 form a disulfide bridge. The segment at 650-677 is disordered; the sequence is YDHPSKPVEKRLMPPPPQKNKDSWLDHV. Composition is skewed to basic and acidic residues over residues 652-661 and 668-677; these read HPSKPVEKRL and KNKDSWLDHV.

This sequence belongs to the glycosyl hydrolase 35 family. Homodimer. May form higher multimers. As to expression, detected in placenta (at protein level). Detected in fibroblasts and testis.

It is found in the lysosome. The protein localises to the cytoplasm. Its subcellular location is the perinuclear region. It catalyses the reaction Hydrolysis of terminal non-reducing beta-D-galactose residues in beta-D-galactosides.. Functionally, cleaves beta-linked terminal galactosyl residues from gangliosides, glycoproteins, and glycosaminoglycans. Has no beta-galactosidase catalytic activity, but plays functional roles in the formation of extracellular elastic fibers (elastogenesis) and in the development of connective tissue. Seems to be identical to the elastin-binding protein (EBP), a major component of the non-integrin cell surface receptor expressed on fibroblasts, smooth muscle cells, chondroblasts, leukocytes, and certain cancer cell types. In elastin producing cells, associates with tropoelastin intracellularly and functions as a recycling molecular chaperone which facilitates the secretions of tropoelastin and its assembly into elastic fibers. The polypeptide is Beta-galactosidase (GLB1) (Homo sapiens (Human)).